Here is a 162-residue protein sequence, read N- to C-terminus: Selenoprotein F (162 aa).

The first 28 residues, 1–28 (MAAGQGGWLRPALGLRLLLATAFQAVSA), serve as a signal peptide directing secretion. Selenocysteine 93 is a non-standard amino acid (selenocysteine).

Belongs to the selenoprotein M/F family. Forms a tight complex with UGGT1/UGCGL1. Interacts with UGGT2/UGCGL2. Interacts with RDH11. In terms of tissue distribution, highest levels in prostate, lower levels in brain, lung, thyroid gland, and large intestine.

It is found in the endoplasmic reticulum lumen. May be involved in redox reactions associated with the formation of disulfide bonds. May contribute to the quality control of protein folding in the endoplasmic reticulum. May regulate protein folding by enhancing the catalytic activity of UGGT1/UGCGL1 and UGGT2/UGCGL2. In Rattus norvegicus (Rat), this protein is Selenoprotein F.